The primary structure comprises 252 residues: Probable transcriptional regulator SauR (252 aa).

Positions 6–68 (NAAAVRAFRI…AGNRHYECSS (63 aa)) constitute an HTH iclR-type domain. Positions 28 to 47 (LAAIVQAIELPKQTVHRILK) form a DNA-binding region, H-T-H motif. The 170-residue stretch at 83 to 252 (PAAARHAILQ…ADEMVKTFCE (170 aa)) folds into the IclR-ED domain.

Its function is as follows. May regulate transcription of the sauSTU operon. The chain is Probable transcriptional regulator SauR (sauR) from Cupriavidus necator (strain ATCC 17699 / DSM 428 / KCTC 22496 / NCIMB 10442 / H16 / Stanier 337) (Ralstonia eutropha).